The following is a 104-amino-acid chain: Circadian clock oscillator protein KaiB (104 aa).

It belongs to the KaiB family. As to quaternary structure, the KaiABC complex composition changes during the circadian cycle to control KaiC phosphorylation. Complexes KaiC(6), KaiA(2-4):KaiC(6), KaiB(6):KaiC(6) and KaiC(6):KaiB(6):KaiA(12) are among the most important forms, many form cooperatively. Undergoes a major conformational rearrangment; in the free state forms homotetramers as a dimer of dimers. When bound to the CI domain of KaiC switches to a monomeric thioredoxin-fold (KaiB(fs)). KaiB(fs) binds CikA, leading it to dephosphorylate phospho-RpaA.

Functionally, key component of the KaiABC oscillator complex, which constitutes the main circadian regulator in cyanobacteria. Complex composition changes during the circadian cycle to control KaiC phosphorylation. KaiA stimulates KaiC autophosphorylation, while KaiB sequesters KaiA, leading to KaiC autodephosphorylation. Phospho-Ser-431 KaiC accumulation triggers binding of KaiB to form the KaiB(6):KaiC(6) complex, leading to changes in output regulators CikA and SasA. KaiB switches to a thioredoxin-like fold (KaiB(fs)) when bound to KaiC. KaiB(6):KaiC(6) formation exposes a site for KaiA binding that sequesters KaiA from KaiC, making the KaiC(6):KaiB(6):KaiA(12) complex that results in KaiC autodephosphorylation. In terms of biological role, a metamorphic protein which reversibly switches between an inactive tetrameric fold and a rare, thioredoxin-like monomeric fold (KaiB(fs)). KaiB(fs) binds phospho-KaiC, KaiA and CikA. KaiA and CikA compete for binding to KaiB(fs), and KaiB(fs) and SasA compete for binding to KaiC, thus the clock oscillator and output signal pathway are tightly coupled. The sequence is that of Circadian clock oscillator protein KaiB from Acaryochloris marina (strain MBIC 11017).